The primary structure comprises 707 residues: Terpene cyclase/mutase atnI (707 aa).

Residues 1–20 are compositionally biased toward polar residues; sequence MGQHIASSESSTNGHVSLET. Residues 1–22 form a disordered region; it reads MGQHIASSESSTNGHVSLETNG. PFTB repeat units follow at residues 130 to 173, 494 to 535, 571 to 608, and 620 to 661; these read AVEI…RLLG, LRDA…VGKT, TAQGLGFIKQSQKPDGGWYGAWGVCFTYAGMFALETLA, and SRRG…VQTA.

Belongs to the terpene cyclase/mutase family.

It participates in secondary metabolite biosynthesis; terpenoid biosynthesis. Terpene cyclase/mutase; part of the gene cluster that mediates the biosynthesis of the meroterpenoids arthripenoids. The pathway begins with the HR-PKS atnH that catalyzes two chain-extension steps to form a reduced triketide, which then primes the SAT domain in the NR-PKS atnG to initiate three more cycles of extension to give a linear hexaketide corresponding to the polyketide part of arthripenoids. The FAD-dependent monooxygenase atnJ then performs an oxidative decarboxylation at C11 of the atnH/atnG product, via an electrophilic aromatic hydroxylation with concomitant ipso-decarboxylation. The membrane-bound polyprenyl transferase atnF then introduces a farnesyl group before the FAD-dependent monooxygenase atnK functions as the first epoxidase on terminal C12'-C13' olefin, followed by a second epoxidation on C7'-C8' catalyzed by atnA. The terpene cyclase/mutase atnI then initiates the sequential tricyclic ring formation through protonation of the terminal epoxide and catalyzes the regioselective and stereoselective 6/6/6-tricyclic ring formation. The cytochrome P450 monooxygenase atnM is responsible for hydroxylating both C1' and C10'. The next steps may involve ketoreduction and acetyl transfer by the ketoreductase atnB and the acetyltransferase atnC, and lead to the production of arthripenoid B, the final biosynthetic product of the atn cluster. The hydroquinone moiety in arthripenoid B is prone to undergo spontaneous oxidation to afford a benzoquinone compound, a key intermediate for generating structure diversity. For instance, addition of a cysteine followed by ring contraction gives arthripenoid A, tautomerization gives the main product arthripenoid C, addition of a molecular of water or amine affords arthripenoid D or E, respectively, and loss of one water forms arthripenoid F. The protein is Terpene cyclase/mutase atnI of Arthrinium sp.